We begin with the raw amino-acid sequence, 218 residues long: Probable 3-keto-L-gulonate-6-phosphate decarboxylase (218 aa).

Substrate is bound at residue D11. The Mg(2+) site is built by E33 and D62. Position 194 (R194) interacts with substrate.

It belongs to the HPS/KGPDC family. KGPDC subfamily. Mg(2+) is required as a cofactor.

The enzyme catalyses 3-dehydro-L-gulonate 6-phosphate + H(+) = L-xylulose 5-phosphate + CO2. It functions in the pathway cofactor degradation; L-ascorbate degradation; D-xylulose 5-phosphate from L-ascorbate: step 2/4. Its function is as follows. Catalyzes the decarboxylation of 3-keto-L-gulonate-6-P into L-xylulose-5-P. Is involved in the anaerobic L-ascorbate utilization. The protein is Probable 3-keto-L-gulonate-6-phosphate decarboxylase (ulaD) of Mycoplasma pneumoniae (strain ATCC 29342 / M129 / Subtype 1) (Mycoplasmoides pneumoniae).